The chain runs to 350 residues: Phosphoribosylformylglycinamidine cyclo-ligase (350 aa).

The protein belongs to the AIR synthase family.

It is found in the cytoplasm. It carries out the reaction 2-formamido-N(1)-(5-O-phospho-beta-D-ribosyl)acetamidine + ATP = 5-amino-1-(5-phospho-beta-D-ribosyl)imidazole + ADP + phosphate + H(+). It participates in purine metabolism; IMP biosynthesis via de novo pathway; 5-amino-1-(5-phospho-D-ribosyl)imidazole from N(2)-formyl-N(1)-(5-phospho-D-ribosyl)glycinamide: step 2/2. This Cupriavidus taiwanensis (strain DSM 17343 / BCRC 17206 / CCUG 44338 / CIP 107171 / LMG 19424 / R1) (Ralstonia taiwanensis (strain LMG 19424)) protein is Phosphoribosylformylglycinamidine cyclo-ligase.